The primary structure comprises 218 residues: Sulfite reductase, assimilatory-type (218 aa).

[4Fe-4S] cluster is bound by residues cysteine 91, cysteine 97, cysteine 131, and cysteine 135. Position 135 (cysteine 135) interacts with siroheme.

Its function is as follows. This enzyme catalyzes the 6-electron reduction of sulfite to sulfide. This is one of several activities required for the biosynthesis of L-cysteine from sulfate. This chain is Sulfite reductase, assimilatory-type, found in Nitratidesulfovibrio vulgaris (strain ATCC 29579 / DSM 644 / CCUG 34227 / NCIMB 8303 / VKM B-1760 / Hildenborough) (Desulfovibrio vulgaris).